The primary structure comprises 135 residues: Probable transporter PD_1892 (135 aa).

4 helical membrane passes run 4 to 24, 45 to 65, 71 to 91, and 114 to 134; these read YWYP…LLLL, AQNI…TVIF, VTVA…GLGT, and IVAT…MGVY.

The protein belongs to the TsuA/YedE (TC 9.B.102) family.

The protein localises to the cell inner membrane. In Xylella fastidiosa (strain Temecula1 / ATCC 700964), this protein is Probable transporter PD_1892.